The sequence spans 764 residues: Kinesin-like protein KIN-14N (764 aa).

The disordered stretch occupies residues 1–50 (MSTRATRPGMLHQKENAADAQAGKRQRTAAGSAARAPLSANAAPPAPDPA). The segment covering 29–50 (AAGSAARAPLSANAAPPAPDPA) has biased composition (low complexity). Residues 105-416 (AEIGKLNGLL…RLHNTILELK (312 aa)) are a coiled coil. Residues 418-747 (NIRVFCRVRP…LRFAARVNSC (330 aa)) enclose the Kinesin motor domain. Residue 498–505 (GQTGSGKT) participates in ATP binding.

It belongs to the TRAFAC class myosin-kinesin ATPase superfamily. Kinesin family. KIN-14 subfamily.

This chain is Kinesin-like protein KIN-14N, found in Oryza sativa subsp. japonica (Rice).